The sequence spans 67 residues: Conotoxin VnMMSK-03 (67 aa).

A signal peptide spans 1 to 20; sequence MMSKLGVVLTICLLPFPLTA. The propeptide occupies 21 to 50; it reads LPMDGDQPADLPALRTQDFEPERSPWFDPV. Intrachain disulfides connect C53–C65, C54–C61, and C58–C64. P63 bears the 4-hydroxyproline mark.

This sequence belongs to the conotoxin M superfamily. In terms of tissue distribution, expressed by the venom duct.

The protein resides in the secreted. The protein is Conotoxin VnMMSK-03 of Conus ventricosus (Mediterranean cone).